A 402-amino-acid chain; its full sequence is Serine/threonine transporter SstT (402 aa).

9 helical membrane passes run 19-39 (IGVV…AIGL), 43-63 (LFVG…VISA), 86-106 (TFAA…TLIL), 138-158 (AITE…GLAM), 179-199 (VVKW…FTSI), 212-232 (LLIL…NPII), 287-307 (IPLG…ILTL), 327-347 (VVAA…LLLI), and 354-374 (FGIS…VGVI).

Belongs to the dicarboxylate/amino acid:cation symporter (DAACS) (TC 2.A.23) family.

Its subcellular location is the cell membrane. It catalyses the reaction L-serine(in) + Na(+)(in) = L-serine(out) + Na(+)(out). The enzyme catalyses L-threonine(in) + Na(+)(in) = L-threonine(out) + Na(+)(out). Functionally, involved in the import of serine and threonine into the cell, with the concomitant import of sodium (symport system). The polypeptide is Serine/threonine transporter SstT (Streptococcus agalactiae serotype Ia (strain ATCC 27591 / A909 / CDC SS700)).